The primary structure comprises 1943 residues: Trichohyalin (1943 aa).

Positions 1 to 91 (MSPLLRSICD…AQACYYALGQ (91 aa)) are S-100-like. EF-hand domains are found at residues 23–48 (CDGAALTKKDLKNLLEREFGAVLRRP) and 49–84 (HDPKTVDLILELLDLDSNGRVDFNEFLLFIFKVAQA). Ca(2+) is bound by residues D32, D62, D64, N66, R68, and E73. Disordered stretches follow at residues 110–164 (LQDR…LEQR), 186–209 (RRAEEEQLQSCKGHETEEFPDEEQ), and 222–274 (GREE…LQEE). The segment covering 197–209 (KGHETEEFPDEEQ) has biased composition (basic and acidic residues). The 1-1; approximate repeat unit spans residues 314–326 (RREQQEERREQQE). Residues 314–377 (RREQQEERRE…QEEERREQQL (64 aa)) form a 5 X 13 AA tandem repeats of R-R-E-Q-E-E-E-R-R-E-Q-Q-L region. The 1-2; approximate repeat unit spans residues 327-339 (RREQQEERREQQL). Residues 340–351 (RREQEERREQQL) form a 1-3; approximate repeat. Repeat copies occupy residues 352 to 364 (RREQEEERREQQL), 365 to 377 (RREQEEERREQQL), 378 to 383 (RREQQL), 384 to 389 (RREQQL), 390 to 395 (RREQQL), 396 to 401 (RREQQL), 402 to 407 (RREQQL), 408 to 413 (RREQQL), 414 to 419 (RREQQL), and 420 to 425 (RREQQL). The segment at 378–425 (RREQQLRREQQLRREQQLRREQQLRREQQLRREQQLRREQQLRREQQL) is 8 X 6 AA tandem repeats of R-R-E-Q-Q-L. The interval 425-683 (LRREQEEERH…REHEEERREQ (259 aa)) is 9 X 28 AA approximate tandem repeats. Disordered stretches follow at residues 426-485 (RREQ…EERR), 509-546 (REQEERREQRLKRQEEEERLQQRLRSEQQLRREQEERR), 608-819 (ERLE…EKEQ), and 837-872 (EEQLQRRERAQQLQEEEDGLQEDQERRRSQEQRRDQ). Basic and acidic residues-rich tracts occupy residues 608–684 (ERLE…REQE), 724–781 (RKQE…ERGR), 789–812 (PLREQRERQLRAEERQQREQRFLP), and 859–872 (DQERRRSQEQRRDQ). 10 consecutive repeat copies span residues 906–935 (LQEEEEELQREEREKRRRQEQERQYREEEQ), 936–965 (LQQEEEQLLREEREKRRRQERERQYRKDKK), 966–995 (LQQKEEQLLGEEPEKRRRQEREKKYREEEE), 996–1025 (LQQEEEQLLREEREKRRRQEWERQYRKKDE), 1026–1055 (LQQEEEQLLREEREKRRLQERERQYREEEE), 1056–1085 (LQQEEEQLLGEERETRRRQELERQYRKEEE), 1086–1115 (LQQEEEQLLREEPEKRRRQERERQCREEEE), 1116–1145 (LQQEEEQLLREEREKRRRQELERQYREEEE), 1146–1175 (VQQEEEQLLREEPEKRRRQELERQYREEEE), and 1176–1204 (LQQEEEQLLREEQEKRRQERERQYREEEE). The segment at 906–1204 (LQEEEEELQR…RERQYREEEE (299 aa)) is 10 X 30 AA tandem repeats. Over residues 950-992 (KRRRQERERQYRKDKKLQQKEEQLLGEEPEKRRRQEREKKYRE) the composition is skewed to basic and acidic residues. 9 disordered regions span residues 950 to 1000 (KRRR…QQEE), 1046 to 1120 (RERQ…QQEE), 1137 to 1162 (ERQYREEEEVQQEEEQLLREEPEKRR), 1193 to 1371 (QERE…RHQE), 1404 to 1435 (REQQLRQDRDRKFREEEQQLSRQERDRKFREE), 1492 to 1691 (QQLR…ERDR), 1757 to 1820 (PERE…RDGK), 1834 to 1864 (EQRLRQERDRQYRAEEQFATQEKSRREEQEL), and 1876 to 1928 (RERK…VRSS). Positions 1052 to 1064 (EEEELQQEEEQLL) are enriched in acidic residues. 2 stretches are compositionally biased toward basic and acidic residues: residues 1065–1085 (GEERETRRRQELERQYRKEEE) and 1092–1111 (QLLREEPEKRRRQERERQCR). Positions 1142–1151 (EEEEVQQEEE) are enriched in acidic residues. The span at 1152 to 1162 (QLLREEPEKRR) shows a compositional bias: basic and acidic residues. Composition is skewed to basic and acidic residues over residues 1214 to 1263 (YRDE…DRQS) and 1274 to 1371 (QQER…RHQE). The segment at 1292–1894 (HFPEEEQLER…IRRQQKEEQR (603 aa)) is 23 X 26 AA approximate tandem repeats. 3 stretches are compositionally biased toward basic and acidic residues: residues 1492–1524 (QQLRRQERDRKFREQELRSQEPERKFLEEEQQL), 1533–1673 (FLQE…REEE), and 1682–1691 (QQLRRQERDR). Residues 1876–1912 (RERKLREEHIRRQQKEEQRHRQVGEIKSQEGKGHGRL) are compositionally biased toward basic and acidic residues.

Belongs to the S100-fused protein family. In terms of assembly, monomer. Substrate of transglutaminase. Some 200 arginines are probably converted to citrullines by peptidylarginine deimidase. As to expression, found in the hard keratinizing tissues such as the inner root sheath (IRS) of hair follicles and medulla, and in the filiform papillae of dorsal tongue epithelium.

Its function is as follows. Intermediate filament-associated protein that associates in regular arrays with keratin intermediate filaments (KIF) of the inner root sheath cells of the hair follicle and the granular layer of the epidermis. It later becomes cross-linked to KIF by isodipeptide bonds. It may serve as scaffold protein, together with involucrin, in the organization of the cell envelope or even anchor the cell envelope to the KIF network. It may be involved in its own calcium-dependent postsynthetic processing during terminal differentiation. The polypeptide is Trichohyalin (TCHH) (Homo sapiens (Human)).